Here is a 583-residue protein sequence, read N- to C-terminus: Poly [ADP-ribose] polymerase 2 (583 aa).

Residues methionine 1–lysine 77 form a disordered region. Residues methionine 1–glycine 103 are N-terminal region (NTR). 2 short sequence motifs (nuclear localization signal) span residues lysine 21–arginine 22 and proline 35–arginine 40. N6-acetyllysine is present on residues lysine 37 and lysine 38. Positions alanine 57 to aspartate 67 are enriched in basic and acidic residues. A WGR domain is found at lysine 104–tyrosine 201. A phosphoserine mark is found at serine 226 and serine 232. The PARP alpha-helical domain maps to glutamate 231–lysine 348. The 228-residue stretch at histidine 356–tryptophan 583 folds into the PARP catalytic domain. Residues histidine 428–serine 430, glycine 437, arginine 444, and serine 470 contribute to the NAD(+) site. Catalysis depends on glutamate 558, which acts as the For poly [ADP-ribose] polymerase activity.

The protein belongs to the ARTD/PARP family. In terms of assembly, component of a base excision repair (BER) complex, containing at least XRCC1, PARP1, POLB and LRIG3. Homo- and heterodimer with PARP1. Interacts (via the PARP catalytic domain) with HPF1. Interacts with core nucleosomes. Auto poly-ADP-ribosylated on serine residues, leading to dissociation of the PARP2-HPF1 complex from chromatin. Poly-ADP-ribosylated by PARP1. In terms of processing, acetylation reduces DNA binding and enzymatic activity. Post-translationally, proteolytically cleaved by caspase-8 (CASP8) in response to apoptosis, leading to its inactivation. In terms of tissue distribution, widely expressed, mainly in actively dividing tissues. The highest levels are in the brain, heart, pancreas, skeletal muscle and testis; also detected in kidney, liver, lung, placenta, ovary and spleen; levels are low in leukocytes, colon, small intestine, prostate and thymus.

The protein resides in the nucleus. It is found in the chromosome. It catalyses the reaction NAD(+) + (ADP-D-ribosyl)n-acceptor = nicotinamide + (ADP-D-ribosyl)n+1-acceptor + H(+).. The catalysed reaction is L-seryl-[protein] + NAD(+) = O-(ADP-D-ribosyl)-L-seryl-[protein] + nicotinamide + H(+). The enzyme catalyses L-aspartyl-[protein] + NAD(+) = 4-O-(ADP-D-ribosyl)-L-aspartyl-[protein] + nicotinamide. It carries out the reaction L-glutamyl-[protein] + NAD(+) = 5-O-(ADP-D-ribosyl)-L-glutamyl-[protein] + nicotinamide. Its activity is regulated as follows. ADP-ribosyltransferase activity is regulated via an allosteric activation mechanism. In absence of activation signal, PARP2 is autoinhibited by the PARP alpha-helical domain (also named HD region), which prevents effective NAD(+)-binding. Activity is highly stimulated by signals, which unfold the PARP alpha-helical domain, relieving autoinhibition. Poly-ADP-ribosyltransferase activity is tightly regulated and PARP2 is removed from damaged chromatin following initial poly-ADP-ribosylation of chromatin to avoid prolonged residence (trapping) that has cytotoxic consequences. CHD1L promotes PARP2 removal from chromatin. ADP-ribosyltransferase activity is inhibited by a number of PARP inhibitors (PARPi) compounds, that are used the treatment of breast or ovarian cancers that have defects in DNA repair by homologous recombination. PARPi molecules (niraparib, talazoparib, and, to a lesser extent, olaparib) also trap PARP2 at DNA damage sites. In terms of biological role, poly-ADP-ribosyltransferase that mediates poly-ADP-ribosylation of proteins and plays a key role in DNA repair. Mediates glutamate, aspartate or serine ADP-ribosylation of proteins: the ADP-D-ribosyl group of NAD(+) is transferred to the acceptor carboxyl group of target residues and further ADP-ribosyl groups are transferred to the 2'-position of the terminal adenosine moiety, building up a polymer with an average chain length of 20-30 units. Serine ADP-ribosylation of proteins constitutes the primary form of ADP-ribosylation of proteins in response to DNA damage. Mediates glutamate and aspartate ADP-ribosylation of target proteins in absence of HPF1. Following interaction with HPF1, catalyzes serine ADP-ribosylation of target proteins; HPF1 conferring serine specificity by completing the PARP2 active site. PARP2 initiates the repair of double-strand DNA breaks: recognizes and binds DNA breaks within chromatin and recruits HPF1, licensing serine ADP-ribosylation of target proteins, such as histones, thereby promoting decompaction of chromatin and the recruitment of repair factors leading to the reparation of DNA strand breaks. HPF1 initiates serine ADP-ribosylation but restricts the polymerase activity of PARP2 in order to limit the length of poly-ADP-ribose chains. Specifically mediates formation of branched poly-ADP-ribosylation. Branched poly-ADP-ribose chains are specifically recognized by some factors, such as APLF. In addition to proteins, also able to ADP-ribosylate DNA: preferentially acts on 5'-terminal phosphates at DNA strand breaks termini in nicked duplex. This is Poly [ADP-ribose] polymerase 2 from Homo sapiens (Human).